Here is a 155-residue protein sequence, read N- to C-terminus: 2-C-methyl-D-erythritol 2,4-cyclodiphosphate synthase (155 aa).

Residues Asp-8 and His-10 each coordinate a divalent metal cation. 4-CDP-2-C-methyl-D-erythritol 2-phosphate is bound by residues Asp-8–His-10 and His-34–Ser-35. Residue His-42 participates in a divalent metal cation binding. Residues Asp-56 to Gly-58, Phe-61 to Asp-65, Ala-100 to Ala-106, Thr-132 to Glu-135, Phe-139, and Arg-142 contribute to the 4-CDP-2-C-methyl-D-erythritol 2-phosphate site.

This sequence belongs to the IspF family. As to quaternary structure, homotrimer. It depends on a divalent metal cation as a cofactor.

It carries out the reaction 4-CDP-2-C-methyl-D-erythritol 2-phosphate = 2-C-methyl-D-erythritol 2,4-cyclic diphosphate + CMP. It participates in isoprenoid biosynthesis; isopentenyl diphosphate biosynthesis via DXP pathway; isopentenyl diphosphate from 1-deoxy-D-xylulose 5-phosphate: step 4/6. Its function is as follows. Involved in the biosynthesis of isopentenyl diphosphate (IPP) and dimethylallyl diphosphate (DMAPP), two major building blocks of isoprenoid compounds. Catalyzes the conversion of 4-diphosphocytidyl-2-C-methyl-D-erythritol 2-phosphate (CDP-ME2P) to 2-C-methyl-D-erythritol 2,4-cyclodiphosphate (ME-CPP) with a corresponding release of cytidine 5-monophosphate (CMP). The protein is 2-C-methyl-D-erythritol 2,4-cyclodiphosphate synthase of Saccharophagus degradans (strain 2-40 / ATCC 43961 / DSM 17024).